The chain runs to 1083 residues: Ubiquitin-protein ligase E3C (1083 aa).

Basic and acidic residues-rich tracts occupy residues 1 to 10 and 20 to 40; these read MFSFEGDFKT and SRKE…RKRE. Residues 1–40 form a disordered region; sequence MFSFEGDFKTRPKVSLGGASRKEEKASLLHRTQEERRKRE. The interval 1 to 60 is cis-determinant of acceptor ubiquitin-binding; the sequence is MFSFEGDFKTRPKVSLGGASRKEEKASLLHRTQEERRKREEERRRLKNAIIIQSFIRGYR. In terms of domain architecture, IQ spans 45 to 74; the sequence is RLKNAIIIQSFIRGYRDRKQQYSIQRSAFD. The disordered stretch occupies residues 355-385; the sequence is SPASASCHDSASDSEEESEEADKPSSPEDGR. Over residues 375–385 the composition is skewed to basic and acidic residues; sequence ADKPSSPEDGR. The 340-residue stretch at 744 to 1083 folds into the HECT domain; it reads NEPDLKKRIR…IECAAGFELS (340 aa). Lys-903 is covalently cross-linked (Glycyl lysine isopeptide (Lys-Gly) (interchain with G-Cter in ubiquitin); by autocatalysis). The active-site Glycyl thioester intermediate is Cys-1051.

It belongs to the UBE3C family. As to quaternary structure, interacts with 26S proteasomes. Interacts (via the HECT domain) with UBE2D1 and, less efficiently, with UBE2L3. In terms of processing, autoubiquitinated; promoting its own degradation. Highly expressed in skeletal muscle. Detected at much lower levels in kidney and pancreas.

The catalysed reaction is S-ubiquitinyl-[E2 ubiquitin-conjugating enzyme]-L-cysteine + [acceptor protein]-L-lysine = [E2 ubiquitin-conjugating enzyme]-L-cysteine + N(6)-ubiquitinyl-[acceptor protein]-L-lysine.. The protein operates within protein modification; protein ubiquitination. Its function is as follows. E3 ubiquitin-protein ligase that specifically catalyzes 'Lys-29'- and 'Lys-48'-linked polyubiquitin chains. Accepts ubiquitin from the E2 ubiquitin-conjugating enzyme UBE2D1 in the form of a thioester and then directly transfers the ubiquitin to targeted substrates. Associates with the proteasome and promotes elongation of ubiquitin chains on substrates bound to the 26S proteasome. Also catalyzes 'Lys-29'- and 'Lys-48'-linked ubiquitination of 26S proteasome subunit ADRM1/RPN13 in response to proteotoxic stress, impairing the ability of the proteasome to bind and degrade ubiquitin-conjugated proteins. Acts as a negative regulator of autophagy by mediating 'Lys-29'- and 'Lys-48'-linked ubiquitination of PIK3C3/VPS34, promoting its degradation. Can assemble unanchored poly-ubiquitin chains in either 'Lys-29'- or 'Lys-48'-linked polyubiquitin chains; with some preference for 'Lys-48' linkages. Acts as a negative regulator of type I interferon by mediating 'Lys-48'-linked ubiquitination of IRF3 and IRF7, leading to their degradation by the proteasome. Catalyzes ubiquitination and degradation of CAND2. The polypeptide is Ubiquitin-protein ligase E3C (Homo sapiens (Human)).